The following is a 269-amino-acid chain: Lipid II flippase Amj (269 aa).

7 helical membrane-spanning segments follow: residues 1 to 21, 31 to 51, 84 to 104, 105 to 125, 161 to 181, 192 to 212, and 245 to 265; these read MHVITTQVLFIFCFLLLIHSI, SGARVGFIASALSLFNVMVIV, FLIFGSTVGTILGIILLPSFV, ALFSRAIIHLAGGGGSVFQVF, LFVINMLITSIYTIGVLSALY, TAVMASGLINGIATMLLAIFV, and VAGTLLAQLMFIPGAYYIAWL.

Belongs to the Amj family.

The protein localises to the cell membrane. It functions in the pathway cell wall biogenesis; peptidoglycan biosynthesis. In terms of biological role, involved in peptidoglycan biosynthesis. Transports lipid-linked peptidoglycan precursors from the inner to the outer leaflet of the cytoplasmic membrane. May serve as a defense mechanism against naturally occurring MurJ antagonists. This is Lipid II flippase Amj from Bacillus subtilis (strain 168).